The primary structure comprises 622 residues: MFDFEYQLKVLPEKPGVYLMKNSSDEVIYVGKAKILKNRVKQYFQQSKNHSEKVRVMVSNIAEFEYIITDSEMEALILECNLIKKYRPKYNILLKDDKGYPYIKITINEDFPRVFISRTIAKDGSRYFGPYTDYSAVRETIELIKKIFPIRSCKRYIRDGQKPTRPCLNYHIKLCSAPCGAHISKQGYALIINDIVQLLSGKDKDILDKLKNQMEEASNSLQFEKAASLRDKIFAVKKITEKQKIIMGSFQNEDYINIAKDEKDSCVQVFFVREGKIIGREHFILEYTSDEREYKIIAEFIKDFYGGAAFVPKTVYVPDIEDKYLLEQWLTIRRGSKVEIKVPKRGEKIELLNLVKKNAKLTLEQFKIKYLQDKALYEVALAELSDILGFDDMPNRIEAYDISNIQGVDSVGSMVVFEKGRSKKSDYRRFKIKTVEGANDYHSMREILRRRFQRGIEEIQQIQKRNLEFSSGKFSVFPDLILIDGGKGHVNIALEVLKELNIEIPVAGMVKDDSHTTRGIIYNNIEKDISLDSNAMKLITRIQDEVHRFAISYHRTLRDKRVLKSILDDIPNIGTIRKKELLKKFGSIESIKKASIDQLLETPSIDKRSALSIKEFFAPNEL.

One can recognise a GIY-YIG domain in the interval 13 to 92; that stretch reads EKPGVYLMKN…IKKYRPKYNI (80 aa). Residues 204–239 form the UVR domain; it reads KDILDKLKNQMEEASNSLQFEKAASLRDKIFAVKKI.

This sequence belongs to the UvrC family. Interacts with UvrB in an incision complex.

Its subcellular location is the cytoplasm. The UvrABC repair system catalyzes the recognition and processing of DNA lesions. UvrC both incises the 5' and 3' sides of the lesion. The N-terminal half is responsible for the 3' incision and the C-terminal half is responsible for the 5' incision. The protein is UvrABC system protein C of Clostridium tetani (strain Massachusetts / E88).